We begin with the raw amino-acid sequence, 488 residues long: Acetyl-coenzyme A carboxylase carboxyl transferase subunit beta, chloroplastic (488 aa).

One can recognise a CoA carboxyltransferase N-terminal domain in the interval 224-488 (LWIQCDNCYG…FFPLNKNEIK (265 aa)). The Zn(2+) site is built by cysteine 228, cysteine 231, cysteine 244, and cysteine 247. The C4-type zinc-finger motif lies at 228–247 (CDNCYGLMYKKVEMNVCEEC).

The protein belongs to the AccD/PCCB family. As to quaternary structure, acetyl-CoA carboxylase is a heterohexamer composed of biotin carboxyl carrier protein, biotin carboxylase and 2 subunits each of ACCase subunit alpha and ACCase plastid-coded subunit beta (accD). Requires Zn(2+) as cofactor.

The protein localises to the plastid. Its subcellular location is the chloroplast stroma. It catalyses the reaction N(6)-carboxybiotinyl-L-lysyl-[protein] + acetyl-CoA = N(6)-biotinyl-L-lysyl-[protein] + malonyl-CoA. It participates in lipid metabolism; malonyl-CoA biosynthesis; malonyl-CoA from acetyl-CoA: step 1/1. In terms of biological role, component of the acetyl coenzyme A carboxylase (ACC) complex. Biotin carboxylase (BC) catalyzes the carboxylation of biotin on its carrier protein (BCCP) and then the CO(2) group is transferred by the transcarboxylase to acetyl-CoA to form malonyl-CoA. The chain is Acetyl-coenzyme A carboxylase carboxyl transferase subunit beta, chloroplastic from Arabis hirsuta (Hairy rock-cress).